A 120-amino-acid polypeptide reads, in one-letter code: Large ribosomal subunit protein uL18 (120 aa).

Positions 1 to 22 are disordered; the sequence is MKLTRRESKNRRHRRVRGKVVG. The span at 8–18 shows a compositional bias: basic residues; it reads SKNRRHRRVRG.

It belongs to the universal ribosomal protein uL18 family. As to quaternary structure, part of the 50S ribosomal subunit; part of the 5S rRNA/L5/L18/L25 subcomplex. Contacts the 5S and 23S rRNAs.

Functionally, this is one of the proteins that bind and probably mediate the attachment of the 5S RNA into the large ribosomal subunit, where it forms part of the central protuberance. This Nostoc punctiforme (strain ATCC 29133 / PCC 73102) protein is Large ribosomal subunit protein uL18.